Consider the following 338-residue polypeptide: F420-dependent glucose-6-phosphate dehydrogenase (338 aa).

Coenzyme F420-(gamma-Glu)n is bound at residue aspartate 40. Residue histidine 41 is the Proton donor of the active site. Residues threonine 77 and 108-109 contribute to the coenzyme F420-(gamma-Glu)n site; that span reads TG. Glutamate 110 functions as the Proton acceptor in the catalytic mechanism. Coenzyme F420-(gamma-Glu)n-binding positions include asparagine 113, 178 to 179, and 181 to 182; these read GG and VV. Substrate is bound by residues threonine 196, lysine 199, lysine 260, and arginine 284.

The protein belongs to the F420-dependent glucose-6-phosphate dehydrogenase family. In terms of assembly, homodimer.

The catalysed reaction is oxidized coenzyme F420-(gamma-L-Glu)(n) + D-glucose 6-phosphate + H(+) = 6-phospho-D-glucono-1,5-lactone + reduced coenzyme F420-(gamma-L-Glu)(n). In terms of biological role, catalyzes the coenzyme F420-dependent oxidation of glucose 6-phosphate (G6P) to 6-phosphogluconolactone. The protein is F420-dependent glucose-6-phosphate dehydrogenase of Gordonia bronchialis (strain ATCC 25592 / DSM 43247 / BCRC 13721 / JCM 3198 / KCTC 3076 / NBRC 16047 / NCTC 10667) (Rhodococcus bronchialis).